Here is a 318-residue protein sequence, read N- to C-terminus: Protoheme IX farnesyltransferase (318 aa).

Transmembrane regions (helical) follow at residues I29–V49, P51–I71, L102–L122, L123–L143, I151–G171, L179–I199, A219–V239, P241–I261, and L280–L300.

Belongs to the UbiA prenyltransferase family. Protoheme IX farnesyltransferase subfamily.

The protein resides in the cell inner membrane. It carries out the reaction heme b + (2E,6E)-farnesyl diphosphate + H2O = Fe(II)-heme o + diphosphate. The protein operates within porphyrin-containing compound metabolism; heme O biosynthesis; heme O from protoheme: step 1/1. In terms of biological role, converts heme B (protoheme IX) to heme O by substitution of the vinyl group on carbon 2 of heme B porphyrin ring with a hydroxyethyl farnesyl side group. The polypeptide is Protoheme IX farnesyltransferase (Nostoc sp. (strain PCC 7120 / SAG 25.82 / UTEX 2576)).